The following is a 400-amino-acid chain: Elongation factor Tu (400 aa).

The tr-type G domain occupies 10–208 (KPHLNVGTIG…TMDEYFPEPQ (199 aa)). The tract at residues 19–26 (GHIDHGKT) is G1. 19–26 (GHIDHGKT) provides a ligand contact to GTP. Residue T26 coordinates Mg(2+). The interval 60–64 (GITIN) is G2. The G3 stretch occupies residues 81-84 (DCPG). GTP-binding positions include 81–85 (DCPGH) and 136–139 (NKTD). Positions 136 to 139 (NKTD) are G4. Residues 174–176 (SAL) are G5.

Belongs to the TRAFAC class translation factor GTPase superfamily. Classic translation factor GTPase family. EF-Tu/EF-1A subfamily. Monomer.

The protein localises to the cytoplasm. The catalysed reaction is GTP + H2O = GDP + phosphate + H(+). Its function is as follows. GTP hydrolase that promotes the GTP-dependent binding of aminoacyl-tRNA to the A-site of ribosomes during protein biosynthesis. This is Elongation factor Tu from Thermosipho melanesiensis (strain DSM 12029 / CIP 104789 / BI429).